A 293-amino-acid chain; its full sequence is tRNA pseudouridine synthase B (293 aa).

The Nucleophile role is filled by D38.

It belongs to the pseudouridine synthase TruB family. Type 1 subfamily.

The enzyme catalyses uridine(55) in tRNA = pseudouridine(55) in tRNA. Functionally, responsible for synthesis of pseudouridine from uracil-55 in the psi GC loop of transfer RNAs. The sequence is that of tRNA pseudouridine synthase B from Solibacter usitatus (strain Ellin6076).